The primary structure comprises 240 residues: T4 protein (240 aa).

This sequence belongs to the poxviruses B9 family.

This Sheeppox virus (strain InS-1) (SPPV) protein is T4 protein.